The following is a 564-amino-acid chain: Quinone-dependent D-lactate dehydrogenase (564 aa).

The FAD-binding PCMH-type domain maps to 36–207 (GTGNALAVVR…TNLQEKRYQV (172 aa)). FAD is bound by residues 70-74 (AANTG), 78-79 (GS), glycine 137, serine 144, glycine 154, and valine 256.

It belongs to the quinone-dependent D-lactate dehydrogenase family. FAD serves as cofactor.

It localises to the cell inner membrane. It catalyses the reaction (R)-lactate + a quinone = a quinol + pyruvate. Its function is as follows. Catalyzes the oxidation of D-lactate to pyruvate. The protein is Quinone-dependent D-lactate dehydrogenase of Haemophilus influenzae (strain ATCC 51907 / DSM 11121 / KW20 / Rd).